The following is a 492-amino-acid chain: Catalase-1 (492 aa).

Residues His-65 and Asn-138 contribute to the active site. Tyr-348 is a heme binding site.

Belongs to the catalase family. Homotetramer. The cofactor is heme.

The protein resides in the peroxisome. The protein localises to the glyoxysome. It carries out the reaction 2 H2O2 = O2 + 2 H2O. Occurs in almost all aerobically respiring organisms and serves to protect cells from the toxic effects of hydrogen peroxide. The chain is Catalase-1 (CAT1) from Triticum aestivum (Wheat).